We begin with the raw amino-acid sequence, 354 residues long: UDP-3-O-acylglucosamine N-acyltransferase (354 aa).

Residue H257 is the Proton acceptor of the active site.

The protein belongs to the transferase hexapeptide repeat family. LpxD subfamily. As to quaternary structure, homotrimer.

The enzyme catalyses a UDP-3-O-[(3R)-3-hydroxyacyl]-alpha-D-glucosamine + a (3R)-hydroxyacyl-[ACP] = a UDP-2-N,3-O-bis[(3R)-3-hydroxyacyl]-alpha-D-glucosamine + holo-[ACP] + H(+). It functions in the pathway bacterial outer membrane biogenesis; LPS lipid A biosynthesis. Catalyzes the N-acylation of UDP-3-O-acylglucosamine using 3-hydroxyacyl-ACP as the acyl donor. Is involved in the biosynthesis of lipid A, a phosphorylated glycolipid that anchors the lipopolysaccharide to the outer membrane of the cell. The protein is UDP-3-O-acylglucosamine N-acyltransferase of Rhizobium johnstonii (strain DSM 114642 / LMG 32736 / 3841) (Rhizobium leguminosarum bv. viciae).